A 156-amino-acid polypeptide reads, in one-letter code: Small ribosomal subunit protein uS7 (156 aa).

The protein belongs to the universal ribosomal protein uS7 family. Part of the 30S ribosomal subunit. Contacts proteins S9 and S11.

One of the primary rRNA binding proteins, it binds directly to 16S rRNA where it nucleates assembly of the head domain of the 30S subunit. Is located at the subunit interface close to the decoding center, probably blocks exit of the E-site tRNA. The protein is Small ribosomal subunit protein uS7 of Gloeothece citriformis (strain PCC 7424) (Cyanothece sp. (strain PCC 7424)).